The sequence spans 193 residues: dCTP deaminase (193 aa).

DCTP is bound by residues 110–115 (RSSLAR), Asp-128, 136–138 (VLE), Tyr-171, Lys-178, and Gln-182. Catalysis depends on Glu-138, which acts as the Proton donor/acceptor. Positions 169–193 (RPYNRREDAKYRNQQGAVASRIDKD) are disordered.

Belongs to the dCTP deaminase family. As to quaternary structure, homotrimer.

It carries out the reaction dCTP + H2O + H(+) = dUTP + NH4(+). It functions in the pathway pyrimidine metabolism; dUMP biosynthesis; dUMP from dCTP (dUTP route): step 1/2. Functionally, catalyzes the deamination of dCTP to dUTP. The protein is dCTP deaminase of Escherichia coli O1:K1 / APEC.